An 83-amino-acid chain; its full sequence is Hainantoxin-III 6 (83 aa).

A signal peptide spans 1-21 (MKASMFLALAGLVLLFVVGYA). Positions 22-48 (SESEEKESPRELLSKIFAVDDFKGEER) are excised as a propeptide. 3 disulfides stabilise this stretch: Cys50–Cys65, Cys57–Cys70, and Cys64–Cys77. A Leucine amide modification is found at Leu81.

Belongs to the neurotoxin 10 (Hwtx-1) family. 15 (Hntx-3) subfamily. Monomer. As to expression, expressed by the venom gland.

It is found in the secreted. Its function is as follows. Selective antagonist of neuronal tetrodotoxin (TTX)-sensitive voltage-gated sodium channels (IC(50)=1270 nM on Nav1.1/SCN1A, 270 nM on Nav1.2/SCN2A, 491 nM on Nav1.3/SCN3A and 232 nM on Nav1.7/SCN9A). This toxin suppress Nav1.7 current amplitude without significantly altering the activation, inactivation, and repriming kinetics. Short extreme depolarizations partially activate the toxin-bound channel, indicating voltage-dependent inhibition of this toxin. This toxin increases the deactivation of the Nav1.7 current after extreme depolarizations. The toxin-Nav1.7 complex is gradually dissociated upon prolonged strong depolarizations in a voltage-dependent manner, and the unbound toxin rebinds to Nav1.7 after a long repolarization. Moreover, analysis of chimeric channels showed that the DIIS3-S4 linker is critical for toxin binding to Nav1.7. These data are consistent with this toxin interacting with Nav1.7 site 4 and trapping the domain II voltage sensor in the closed state. In Cyriopagopus hainanus (Chinese bird spider), this protein is Hainantoxin-III 6.